The primary structure comprises 2067 residues: Dedicator of cytokinesis protein 11 (2067 aa).

A PH domain is found at 162–269; that stretch reads GVMKQGWLQK…WVNTIKQALL (108 aa). Residues 274–302 form a disordered region; that stretch reads DRRNGSETSEGSLDDDSSSQGKPESITES. Residues 291–302 are compositionally biased toward polar residues; that stretch reads SSQGKPESITES. A C2 DOCK-type domain is found at 643 to 820; it reads NNHLYIYPQQ…PLFKVRAYVA (178 aa). The tract at residues 1224–1267 is disordered; it reads SSTIVDKEPSGSVTQNGLSRRGESRGSMYGDPGTPDINELHRRG. Positions 1614-2040 constitute a DOCKER domain; the sequence is RSYASTPELR…LSEIIHEQIF (427 aa).

This sequence belongs to the DOCK family.

In terms of biological role, guanine nucleotide-exchange factor (GEF) that activates CDC42 by exchanging bound GDP for free GTP. This chain is Dedicator of cytokinesis protein 11, found in Danio rerio (Zebrafish).